A 429-amino-acid polypeptide reads, in one-letter code: Ribosomal RNA small subunit methyltransferase B (429 aa).

S-adenosyl-L-methionine-binding positions include 254–260 (CAAPGGK), D277, D303, and D322. C375 acts as the Nucleophile in catalysis.

It belongs to the class I-like SAM-binding methyltransferase superfamily. RsmB/NOP family.

It localises to the cytoplasm. The catalysed reaction is cytidine(967) in 16S rRNA + S-adenosyl-L-methionine = 5-methylcytidine(967) in 16S rRNA + S-adenosyl-L-homocysteine + H(+). Its function is as follows. Specifically methylates the cytosine at position 967 (m5C967) of 16S rRNA. The polypeptide is Ribosomal RNA small subunit methyltransferase B (Yersinia pseudotuberculosis serotype O:1b (strain IP 31758)).